The sequence spans 301 residues: D-alanine--D-alanine ligase A (301 aa).

Residues 96-290 (KKILRYEGVE…YSKLLDMIIE (195 aa)) form the ATP-grasp domain. 123–178 (LDKLGFPLVVKPNSGGSSVGVKIVYNKNELISMLETVFEWDSEVVIEKYIKGDEIT) contacts ATP. Asp-245, Glu-257, and Asn-259 together coordinate Mg(2+).

This sequence belongs to the D-alanine--D-alanine ligase family. It depends on Mg(2+) as a cofactor. Mn(2+) is required as a cofactor.

Its subcellular location is the cytoplasm. It catalyses the reaction 2 D-alanine + ATP = D-alanyl-D-alanine + ADP + phosphate + H(+). It functions in the pathway cell wall biogenesis; peptidoglycan biosynthesis. Functionally, cell wall formation. The protein is D-alanine--D-alanine ligase A of Bacillus cereus (strain ATCC 14579 / DSM 31 / CCUG 7414 / JCM 2152 / NBRC 15305 / NCIMB 9373 / NCTC 2599 / NRRL B-3711).